Consider the following 258-residue polypeptide: tRNA pseudouridine synthase A (258 aa).

The Nucleophile role is filled by Asp52. Substrate is bound at residue Tyr110.

This sequence belongs to the tRNA pseudouridine synthase TruA family. In terms of assembly, homodimer.

The catalysed reaction is uridine(38/39/40) in tRNA = pseudouridine(38/39/40) in tRNA. Functionally, formation of pseudouridine at positions 38, 39 and 40 in the anticodon stem and loop of transfer RNAs. The sequence is that of tRNA pseudouridine synthase A from Francisella tularensis subsp. novicida (strain U112).